A 176-amino-acid chain; its full sequence is NAD(P)H-quinone oxidoreductase subunit J (176 aa).

The tract at residues 1–32 is disordered; that stretch reads MEKEGLAKSSDTSIKKEGFISQSLSKDGIPNQ. Polar residues predominate over residues 20 to 32; the sequence is ISQSLSKDGIPNQ.

It belongs to the complex I 30 kDa subunit family. As to quaternary structure, NDH-1 can be composed of about 15 different subunits; different subcomplexes with different compositions have been identified which probably have different functions.

It is found in the cellular thylakoid membrane. The enzyme catalyses a plastoquinone + NADH + (n+1) H(+)(in) = a plastoquinol + NAD(+) + n H(+)(out). It carries out the reaction a plastoquinone + NADPH + (n+1) H(+)(in) = a plastoquinol + NADP(+) + n H(+)(out). Its function is as follows. NDH-1 shuttles electrons from an unknown electron donor, via FMN and iron-sulfur (Fe-S) centers, to quinones in the respiratory and/or the photosynthetic chain. The immediate electron acceptor for the enzyme in this species is believed to be plastoquinone. Couples the redox reaction to proton translocation, and thus conserves the redox energy in a proton gradient. Cyanobacterial NDH-1 also plays a role in inorganic carbon-concentration. The protein is NAD(P)H-quinone oxidoreductase subunit J of Prochlorococcus marinus (strain MIT 9215).